The following is a 318-amino-acid chain: MSDGGAGAKGAGFGMPRVGMGTAVQGPRPEPIRRAVLKAIEAGYRHFDTAAHYETEAPIGEAAAEAVRSGAIASRADLFITSKLWCSDAHRDRVLPALRQTLWNLQMEYVDLYLVHWPVSMKPGRYKAPFTADDFVPFDMRAVWEAMEECHRLGLAKAIGVCNFSCKKLDTLLSFATIPPAVNQVEVNPVWQQRKLRELCREKGVQICAYSPLGASGTHWGSDSVMASAVLRDIAQSKGKTVAQVCLRWVYEQGDCLIVKSFDEARMRENLDIVGWELTEEERQRIAGIPQRKINRALRFVSDHGPYKSLDDLWDGEI.

Aspartate 48 lines the NADP(+) pocket. The Proton donor role is filled by tyrosine 53. Histidine 116 serves as a coordination point for substrate. NADP(+) contacts are provided by residues 162 to 163, glutamine 184, 262 to 270, and 277 to 285; these read CN, FDEARMREN, and ELTEEERQR.

Belongs to the aldo/keto reductase family. Confined to cells participating in long distance transport (e.g. in the parts of pericycle cells adjacent to the protoxylem and metaxylem) in roots and to vascular bundles in shoots.

It carries out the reaction 2'-deoxymugineate + NAD(+) = 3''-deamino-3''-oxonicotianamine + NADH + H(+). The catalysed reaction is 2'-deoxymugineate + NADP(+) = 3''-deamino-3''-oxonicotianamine + NADPH + H(+). It participates in siderophore biosynthesis. Its function is as follows. Catalyzes the reduction of a 3''-keto intermediate during the biosynthesis of 2'-deoxymugineic acid (DMA) from L-Met. Involved in the formation of phytosiderophores (MAs) belonging to the mugineic acid family and required to acquire iron. In Oryza sativa subsp. japonica (Rice), this protein is Deoxymugineic acid synthase 1.